Here is a 520-residue protein sequence, read N- to C-terminus: Glycosyl hydrolase family 109 protein 5 (520 aa).

A signal peptide spans 1 to 27 (MRTFKSLMISLCMGTTLCMCLPQTTTA). NAD(+) is bound by residues 77-78 (MR), Asp99, 147-150 (WLHH), 167-168 (EV), and Asn196. Substrate contacts are provided by residues Tyr225, Arg248, 260–263 (YATH), and Tyr338. Tyr260 is a binding site for NAD(+).

Belongs to the Gfo/Idh/MocA family. Glycosyl hydrolase 109 subfamily. The cofactor is NAD(+).

In terms of biological role, glycosidase. This Phocaeicola vulgatus (strain ATCC 8482 / DSM 1447 / JCM 5826 / CCUG 4940 / NBRC 14291 / NCTC 11154) (Bacteroides vulgatus) protein is Glycosyl hydrolase family 109 protein 5.